Here is a 589-residue protein sequence, read N- to C-terminus: Muscarinic acetylcholine receptor M3 (589 aa).

Over 1-66 the chain is Extracellular; that stretch reads MTLHSNSTTS…DPLGGHTIWQ (66 aa). Residues N6, N15, N41, N48, and N52 are each glycosylated (N-linked (GlcNAc...) asparagine). Residues 67–90 traverse the membrane as a helical segment; the sequence is VVFIAFLTGFLALVTIIGNILVIV. Over 91 to 103 the chain is Cytoplasmic; it reads AFKVNKQLKTVNN. Residues 104–129 traverse the membrane as a helical segment; the sequence is YFLLSLACADLIIGVISMNLFTTYII. Over 130-141 the chain is Extracellular; the sequence is MNRWALGNLACD. C140 and C220 are disulfide-bonded. The chain crosses the membrane as a helical span at residues 142–163; that stretch reads LWLSIDYVASNASVMNLLVISF. The Cytoplasmic segment spans residues 164–183; the sequence is DRYFSITRPLTYRAKRTTKR. A helical membrane pass occupies residues 184 to 205; that stretch reads AGVMIGLAWVISFVLWAPAILF. Topologically, residues 206–228 are extracellular; it reads WQYFVGKRTVPPGECFIQFLSEP. The chain crosses the membrane as a helical span at residues 229–251; sequence TITFGTAIAAFYMPVTIMTILYW. The Cytoplasmic portion of the chain corresponds to 252-490; sequence RIYKETEKRT…SLIKEKKAAQ (239 aa). The short motif at 274–280 is the Basolateral sorting signal element; that stretch reads AEAENFV. 2 disordered regions span residues 275-295 and 323-356; these read EAENFVHPTGSSRSCSSYELQ and AEQMDQDHSSSDSWNNNDAAASLENSASSDEEDI. Polar residues predominate over residues 283 to 295; sequence TGSSRSCSSYELQ. Over residues 333–344 the composition is skewed to low complexity; it reads SDSWNNNDAAAS. A Phosphoserine modification is found at S384. Residues 491–513 traverse the membrane as a helical segment; it reads TLSAILLAFIITWTPYNIMVLVN. The Extracellular segment spans residues 514–525; sequence TFCDSCIPKTYW. C516 and C519 are disulfide-bonded. A helical transmembrane segment spans residues 526-545; sequence NLGYWLCYINSTVNPVCYAL. Topologically, residues 546 to 589 are cytoplasmic; that stretch reads CNKTFRTTFKMLLLCQCDKRKRRKQQYQQRQSVIFHKRVPEQAL.

This sequence belongs to the G-protein coupled receptor 1 family. Muscarinic acetylcholine receptor subfamily. CHRM3 sub-subfamily. Homodimer; the dimers can form tetramers. Interacts with NALCN. Interacts with TMEM147. In terms of tissue distribution, expressed in cerebral cortex, submandibular gland, hypothalamus, pancreas, liver, and ileum.

The protein localises to the cell membrane. It is found in the postsynaptic cell membrane. Its subcellular location is the basolateral cell membrane. The protein resides in the endoplasmic reticulum membrane. Its function is as follows. The muscarinic acetylcholine receptor mediates various cellular responses, including inhibition of adenylate cyclase, breakdown of phosphoinositides and modulation of potassium channels through the action of G proteins. Primary transducing effect is Pi turnover. In Mus musculus (Mouse), this protein is Muscarinic acetylcholine receptor M3 (Chrm3).